A 131-amino-acid chain; its full sequence is Small ribosomal subunit protein uS8 (131 aa).

The protein belongs to the universal ribosomal protein uS8 family. As to quaternary structure, part of the 30S ribosomal subunit. Contacts proteins S5 and S12.

One of the primary rRNA binding proteins, it binds directly to 16S rRNA central domain where it helps coordinate assembly of the platform of the 30S subunit. This Sulfurimonas denitrificans (strain ATCC 33889 / DSM 1251) (Thiomicrospira denitrificans (strain ATCC 33889 / DSM 1251)) protein is Small ribosomal subunit protein uS8.